The sequence spans 316 residues: tRNA-cytidine(32) 2-sulfurtransferase (316 aa).

The PP-loop motif motif lies at 52 to 57 (SGGKDS). Residues Cys-127, Cys-130, and Cys-218 each contribute to the [4Fe-4S] cluster site.

The protein belongs to the TtcA family. Homodimer. It depends on Mg(2+) as a cofactor. [4Fe-4S] cluster is required as a cofactor.

Its subcellular location is the cytoplasm. It carries out the reaction cytidine(32) in tRNA + S-sulfanyl-L-cysteinyl-[cysteine desulfurase] + AH2 + ATP = 2-thiocytidine(32) in tRNA + L-cysteinyl-[cysteine desulfurase] + A + AMP + diphosphate + H(+). Its pathway is tRNA modification. In terms of biological role, catalyzes the ATP-dependent 2-thiolation of cytidine in position 32 of tRNA, to form 2-thiocytidine (s(2)C32). The sulfur atoms are provided by the cysteine/cysteine desulfurase (IscS) system. This is tRNA-cytidine(32) 2-sulfurtransferase from Haemophilus ducreyi (strain 35000HP / ATCC 700724).